The primary structure comprises 473 residues: T-box transcription factor TBX6L (473 aa).

The segment at residues 43-217 (LWDKFSSIGT…NNPFAKGFRD (175 aa)) is a DNA-binding region (T-box). A disordered region spans residues 342–361 (RLNPQETHHNSRPKIQLQPP).

In terms of tissue distribution, exclusively expressed by ventral mesendoderm.

It is found in the nucleus. Functionally, probable transcriptional regulator involved in developmental processes. The protein is T-box transcription factor TBX6L (tbx6l) of Danio rerio (Zebrafish).